The chain runs to 82 residues: uncharacterized protein (82 aa).

The interval 1–20 (MMNLSPPFKSPSGSSRAGRR) is disordered.

This is an uncharacterized protein from Archaeoglobus fulgidus (strain ATCC 49558 / DSM 4304 / JCM 9628 / NBRC 100126 / VC-16).